The sequence spans 306 residues: Ribonuclease Z (306 aa).

H63, H65, D67, H68, H141, D211, and H269 together coordinate Zn(2+). D67 acts as the Proton acceptor in catalysis.

This sequence belongs to the RNase Z family. Homodimer. It depends on Zn(2+) as a cofactor.

The catalysed reaction is Endonucleolytic cleavage of RNA, removing extra 3' nucleotides from tRNA precursor, generating 3' termini of tRNAs. A 3'-hydroxy group is left at the tRNA terminus and a 5'-phosphoryl group is left at the trailer molecule.. Zinc phosphodiesterase, which displays some tRNA 3'-processing endonuclease activity. Probably involved in tRNA maturation, by removing a 3'-trailer from precursor tRNA. The chain is Ribonuclease Z from Staphylococcus aureus (strain Mu3 / ATCC 700698).